Reading from the N-terminus, the 192-residue chain is uncharacterized protein (192 aa).

The region spanning 29–160 (HRQAAVLIPI…PLDIYRRGDS (132 aa)) is the Nudix hydrolase domain. The short motif at 67-89 (GAVDDTDTSVIAAALREAEEEVA) is the Nudix box element. Positions 83 and 87 each coordinate Mg(2+).

It belongs to the Nudix hydrolase family. PCD1 subfamily. Mn(2+) is required as a cofactor. It depends on Mg(2+) as a cofactor.

Functionally, probably mediates the hydrolysis of some nucleoside diphosphate derivatives. This is an uncharacterized protein from Escherichia coli O7:K1 (strain IAI39 / ExPEC).